We begin with the raw amino-acid sequence, 248 residues long: HTH-type transcriptional regulator GgaR (248 aa).

Residues 22–90 form the HTH gntR-type domain; that stretch reads TPLYIKFAET…RGYGTQINNI (69 aa). The segment at residues 50 to 69 is a DNA-binding region (H-T-H motif); the sequence is ERDLSQLTGVSRITVRKAMQ.

Senses ADP-glucose (ADPG), which is the substrate for glycogen elongation, as an effector. In the presence of ADPG, GgaR becomes inactive and derepresses the yegTUV operon, leading to glycogen accumulation. In contrast, in the absence of glucose, the concentration of ADPG decreases, GgaR becomes active, and glycogen accumulation is repressed. In terms of biological role, transcriptional regulator that regulates glycogen accumulation in response to the amount of glucose available to the cell. Acts as a repressor of the yegTUV operon, which may be involved in glycogen accumulation. The protein is HTH-type transcriptional regulator GgaR of Escherichia coli O6:H1 (strain CFT073 / ATCC 700928 / UPEC).